A 404-amino-acid chain; its full sequence is Argininosuccinate synthase (404 aa).

An ATP-binding site is contributed by Ala-15–Ser-23. Position 94 (Tyr-94) interacts with L-citrulline. Gly-124 contacts ATP. Residues Thr-126, Asn-130, and Asp-131 each contribute to the L-aspartate site. Asn-130 serves as a coordination point for L-citrulline. 4 residues coordinate L-citrulline: Arg-134, Ser-182, Glu-266, and Tyr-278.

This sequence belongs to the argininosuccinate synthase family. Type 1 subfamily. As to quaternary structure, homotetramer.

The protein resides in the cytoplasm. The enzyme catalyses L-citrulline + L-aspartate + ATP = 2-(N(omega)-L-arginino)succinate + AMP + diphosphate + H(+). It functions in the pathway amino-acid biosynthesis; L-arginine biosynthesis; L-arginine from L-ornithine and carbamoyl phosphate: step 2/3. This is Argininosuccinate synthase from Streptomyces avermitilis (strain ATCC 31267 / DSM 46492 / JCM 5070 / NBRC 14893 / NCIMB 12804 / NRRL 8165 / MA-4680).